A 322-amino-acid chain; its full sequence is Putative MgpC-like protein MPN_367 (322 aa).

The segment covering 1–48 (MVGSGAAGSASSLQGNGSNSSGLKSLLRSAPVSVPPSSTSNQTLSLSN) has biased composition (low complexity). Disordered regions lie at residues 1–59 (MVGS…AVVS) and 118–145 (DATS…EPAL). The span at 120-134 (TSTNLPHAAGASQTG) shows a compositional bias: polar residues.

It belongs to the MgpC family.

This is Putative MgpC-like protein MPN_367 from Mycoplasma pneumoniae (strain ATCC 29342 / M129 / Subtype 1) (Mycoplasmoides pneumoniae).